Consider the following 645-residue polypeptide: tRNA 5-methylaminomethyl-2-thiouridine biosynthesis bifunctional protein MnmC (645 aa).

A tRNA (mnm(5)s(2)U34)-methyltransferase region spans residues 1-230; that stretch reads MPMSEPIDWL…KRHNLHAVFD (230 aa). The segment at 254–645 is FAD-dependent cmnm(5)s(2)U34 oxidoreductase; that stretch reads LGAGIAGAAA…LASERLGRRR (392 aa).

The protein in the N-terminal section; belongs to the methyltransferase superfamily. tRNA (mnm(5)s(2)U34)-methyltransferase family. In the C-terminal section; belongs to the DAO family. Requires FAD as cofactor.

It is found in the cytoplasm. It carries out the reaction 5-aminomethyl-2-thiouridine(34) in tRNA + S-adenosyl-L-methionine = 5-methylaminomethyl-2-thiouridine(34) in tRNA + S-adenosyl-L-homocysteine + H(+). Catalyzes the last two steps in the biosynthesis of 5-methylaminomethyl-2-thiouridine (mnm(5)s(2)U) at the wobble position (U34) in tRNA. Catalyzes the FAD-dependent demodification of cmnm(5)s(2)U34 to nm(5)s(2)U34, followed by the transfer of a methyl group from S-adenosyl-L-methionine to nm(5)s(2)U34, to form mnm(5)s(2)U34. The sequence is that of tRNA 5-methylaminomethyl-2-thiouridine biosynthesis bifunctional protein MnmC from Delftia acidovorans (strain DSM 14801 / SPH-1).